Here is a 310-residue protein sequence, read N- to C-terminus: MEDKIKHKLRIGWSYLLFLKQRVIHDRLTVSAGYMAYITLLSLVPLITVLLSVLSQFPVFSGAGDTVQAFVIQNFVPAASDAVEASLKEFISNTGKMTAVGSGFLFVASVMLISSIDRSLNYIWRVKKKRRPMYSFSLYWMILTLGPLLVGASLAATSYVTSLKIMDDEIVSSFYRTLLGWLPIILSFSAFVGLYLLVPNKKVRVTHALIGAMSAGCLFEFSKVGFAQYITQFPSYQVIYGALAAVPILFVWVYLCWIIVLIGAEITASLGEFEGWLAGKVSTNILESDIKALTEQQGLIESDSTDPESK.

A run of 6 helical transmembrane segments spans residues tyrosine 34–leucine 54, methionine 97–aspartate 117, phenylalanine 136–alanine 156, leucine 178–valine 198, histidine 207–alanine 227, and alanine 242–isoleucine 262.

Belongs to the UPF0761 family.

The protein resides in the cell inner membrane. The chain is UPF0761 membrane protein VFMJ11_0098 from Aliivibrio fischeri (strain MJ11) (Vibrio fischeri).